We begin with the raw amino-acid sequence, 246 residues long: Cytochrome c oxidase subunit 2 (246 aa).

Transmembrane regions (helical) follow at residues 31-51 (HMMY…YVMM) and 72-92 (IMWT…SFML). 6 residues coordinate Cu cation: H175, C210, E212, C214, H218, and M221. E212 lines the Mg(2+) pocket.

Belongs to the cytochrome c oxidase subunit 2 family. Component of the cytochrome c oxidase (complex IV, CIV), a multisubunit enzyme composed of a catalytic core of 3 subunits and several supernumerary subunits. The complex exists as a monomer or a dimer and forms supercomplexes (SCs) in the inner mitochondrial membrane with ubiquinol-cytochrome c oxidoreductase (cytochrome b-c1 complex, complex III, CIII). Requires Cu cation as cofactor.

Its subcellular location is the mitochondrion inner membrane. The enzyme catalyses 4 Fe(II)-[cytochrome c] + O2 + 8 H(+)(in) = 4 Fe(III)-[cytochrome c] + 2 H2O + 4 H(+)(out). In terms of biological role, component of the cytochrome c oxidase, the last enzyme in the mitochondrial electron transport chain which drives oxidative phosphorylation. The respiratory chain contains 3 multisubunit complexes succinate dehydrogenase (complex II, CII), ubiquinol-cytochrome c oxidoreductase (cytochrome b-c1 complex, complex III, CIII) and cytochrome c oxidase (complex IV, CIV), that cooperate to transfer electrons derived from NADH and succinate to molecular oxygen, creating an electrochemical gradient over the inner membrane that drives transmembrane transport and the ATP synthase. Cytochrome c oxidase is the component of the respiratory chain that catalyzes the reduction of oxygen to water. Electrons originating from reduced cytochrome c in the intermembrane space (IMS) are transferred via the dinuclear copper A center (CU(A)) of subunit 2 and heme A of subunit 1 to the active site in subunit 1, a binuclear center (BNC) formed by heme A3 and copper B (CU(B)). The BNC reduces molecular oxygen to 2 water molecules using 4 electrons from cytochrome c in the IMS and 4 protons from the mitochondrial matrix. The chain is Cytochrome c oxidase subunit 2 (COX2) from Debaryomyces hansenii (strain ATCC 36239 / CBS 767 / BCRC 21394 / JCM 1990 / NBRC 0083 / IGC 2968) (Yeast).